The primary structure comprises 130 residues: Holin-like protein CidA (130 aa).

The next 4 membrane-spanning stretches (helical) occupy residues Phe6–Glu26, Leu31–Phe51, Phe65–Ala85, and Ile93–Ile113.

Belongs to the CidA/LrgA family. CidA subfamily.

It localises to the cell membrane. Functionally, increases the activity of extracellular murein hydrolases possibly by mediating their export via hole formation. Inhibited by the antiholin-like proteins LrgAB. In an unstressed cell, the LrgAB products probably inhibit the function of the CidAB proteins. When a cell is stressed by the addition of antibiotics or by other factors in the environment, the CidAB proteins possibly oligomerize within the bacterial cell membrane, creating lesions that disrupt the proton motive force, which in turn results in loss of cell viability. These lesions are also hypothesized to regulate the subsequent cell lysis by either allowing the murein hydrolases access to the cell wall substrate and/or regulating their activity by a possible change in the cell wall pH that results from loss of membrane potential. The polypeptide is Holin-like protein CidA (Staphylococcus epidermidis (strain ATCC 35984 / DSM 28319 / BCRC 17069 / CCUG 31568 / BM 3577 / RP62A)).